Consider the following 337-residue polypeptide: DNA-directed RNA polymerase subunit alpha (337 aa).

Positions 1 to 233 are alpha N-terminal domain (alpha-NTD); sequence MVREEVAVST…DLFIPFLHAE (233 aa). Positions 266–337 are alpha C-terminal domain (alpha-CTD); sequence GIALKCIFID…FTIDLPKNKF (72 aa).

The protein belongs to the RNA polymerase alpha chain family. As to quaternary structure, in plastids the minimal PEP RNA polymerase catalytic core is composed of four subunits: alpha, beta, beta', and beta''. When a (nuclear-encoded) sigma factor is associated with the core the holoenzyme is formed, which can initiate transcription.

It localises to the plastid. The protein localises to the chloroplast. The enzyme catalyses RNA(n) + a ribonucleoside 5'-triphosphate = RNA(n+1) + diphosphate. In terms of biological role, DNA-dependent RNA polymerase catalyzes the transcription of DNA into RNA using the four ribonucleoside triphosphates as substrates. The chain is DNA-directed RNA polymerase subunit alpha from Liriodendron tulipifera (Tuliptree).